Consider the following 134-residue polypeptide: UPF0412 protein YaaI (134 aa).

An N-terminal signal peptide occupies residues 1–23 (MKSVFTLSASLAISLLLCCTAQA).

Belongs to the UPF0412 family.

The protein is UPF0412 protein YaaI of Escherichia coli O7:K1 (strain IAI39 / ExPEC).